The primary structure comprises 209 residues: Uracil phosphoribosyltransferase (209 aa).

5-phospho-alpha-D-ribose 1-diphosphate is bound by residues arginine 79, arginine 104, and 131-139 (DPMLATGVS). Uracil is bound by residues isoleucine 194 and 199–201 (GDA). 5-phospho-alpha-D-ribose 1-diphosphate is bound at residue aspartate 200.

It belongs to the UPRTase family. The cofactor is Mg(2+).

The enzyme catalyses UMP + diphosphate = 5-phospho-alpha-D-ribose 1-diphosphate + uracil. It participates in pyrimidine metabolism; UMP biosynthesis via salvage pathway; UMP from uracil: step 1/1. Allosterically activated by GTP. Functionally, catalyzes the conversion of uracil and 5-phospho-alpha-D-ribose 1-diphosphate (PRPP) to UMP and diphosphate. The polypeptide is Uracil phosphoribosyltransferase (Thermotoga neapolitana (strain ATCC 49049 / DSM 4359 / NBRC 107923 / NS-E)).